Reading from the N-terminus, the 455-residue chain is Rhodopsin (455 aa).

Topologically, residues 1 to 34 are extracellular; it reads MVESTTLVNQTWWYNPTVDIHPHWAKFDPIPDAV. Residue Asn9 is glycosylated (N-linked (GlcNAc...) asparagine). A helical transmembrane segment spans residues 35–59; that stretch reads YYSVGIFIGVVGIIGILGNGVVIYL. Over 60 to 71 the chain is Cytoplasmic; the sequence is FSKTKSLQTPAN. A helical membrane pass occupies residues 72 to 98; that stretch reads MFIINLAMSDLSFSAINGFPLKTISAF. At 99–110 the chain is on the extracellular side; that stretch reads MKKWIFGKVACQ. Residues Cys109 and Cys187 are joined by a disulfide bond. A helical membrane pass occupies residues 111–132; it reads LYGLLGGIFGFMSINTMAMISI. The 'Ionic lock' involved in activated form stabilization motif lies at 133–135; that stretch reads DRY. The Cytoplasmic portion of the chain corresponds to 133–152; that stretch reads DRYNVIGRPMAASKKMSHRR. A helical membrane pass occupies residues 153–173; that stretch reads AFLMIIFVWMWSIVWSVGPVF. The Extracellular segment spans residues 174–200; the sequence is NWGAYVPEGILTSCSFDYLSTDPSTRS. Residues 201-225 form a helical membrane-spanning segment; that stretch reads FILCMYFCGFMLPIIIIAFCYFNIV. Residues 226-262 are Cytoplasmic-facing; sequence MSVSNHEKEMAAMAKRLNAKELRKAQAGASAEMKLAK. Residues 263–284 traverse the membrane as a helical segment; it reads ISMVIITQFMLSWSPYAIIALL. At 285–294 the chain is on the extracellular side; it reads AQFGPAEWVT. Residues 295-316 form a helical membrane-spanning segment; that stretch reads PYAAELPVLFAKASAIHNPIVY. Lys306 carries the post-translational modification N6-(retinylidene)lysine. The Cytoplasmic portion of the chain corresponds to 317 to 455; it reads SVSHPKFREA…QGVDNQAYQA (139 aa). S-palmitoyl cysteine attachment occurs at residues Cys337 and Cys338. Residues 378 to 387 are compositionally biased toward low complexity; sequence QKMQAQQAAY. A disordered region spans residues 378-455; the sequence is QKMQAQQAAY…QGVDNQAYQA (78 aa). Over residues 388 to 433 the composition is skewed to pro residues; sequence QPPPPPQGYPPQGYPPQGAYPPPQGYPPQGYPPQGYPPQGYPPQGA. 6 repeat units span residues 395–399, 400–404, 412–416, 417–421, 422–426, and 427–431. The interval 395–431 is 6 X 5 AA repeats of G-Y-P-P-Q; sequence GYPPQGYPPQGAYPPPQGYPPQGYPPQGYPPQGYPPQ.

The protein belongs to the G-protein coupled receptor 1 family. Opsin subfamily. Post-translationally, contains one covalently linked retinal chromophore. Upon light absorption, the covalently bound 11-cis-retinal is converted to all-trans-retinal. After hydrolysis of the Schiff base and release of the covalently bound all-trans-retinal, active rhodopsin is regenerated by binding of a fresh molecule of 11-cis-retinal.

Its subcellular location is the cell projection. The protein resides in the rhabdomere membrane. Its function is as follows. Photoreceptor required for image-forming vision at low light intensity. Light-induced isomerization of 11-cis to all-trans retinal triggers a conformational change that activates signaling via G-proteins. Signaling mediates the activation of phospholipase C. Subsequent receptor phosphorylation mediates displacement of the bound G-protein alpha subunit by arrestin and terminates signaling. In Enteroctopus dofleini (North Pacific giant octopus), this protein is Rhodopsin (RHO).